Reading from the N-terminus, the 291-residue chain is Probable S-adenosylmethionine-dependent methyltransferase CRG1 (291 aa).

This sequence belongs to the methyltransferase superfamily.

The protein localises to the cytoplasm. Its function is as follows. Probable S-adenosylmethionine-dependent methyltransferase which mediates cantharidin resistance. In Saccharomyces cerevisiae (strain ATCC 204508 / S288c) (Baker's yeast), this protein is Probable S-adenosylmethionine-dependent methyltransferase CRG1 (CRG1).